Consider the following 550-residue polypeptide: Cytokinin dehydrogenase 10 (550 aa).

The first 26 residues, 1 to 26 (MMPRAQLTTFLIVTSFLSTVPYLRAP), serve as a signal peptide directing secretion. The FAD-binding PCMH-type domain occupies 64-245 (VHATPNGVFR…TRARIRLEPA (182 aa)). FAD-binding residues include Gly100, Lys101, and Gly102. At His103 the chain carries Pros-8alpha-FAD histidine. Positions 104, 108, 169, 174, 180, 184, and 235 each coordinate FAD. An N-linked (GlcNAc...) asparagine glycan is attached at Asn289. 3 residues coordinate FAD: Tyr489, Ser524, and Gln527. The interval 523 to 550 (LSPGQGIFPPPPPPSPPPPAAGEPITAS) is disordered. Pro residues predominate over residues 530–543 (FPPPPPPSPPPPAA).

Belongs to the oxygen-dependent FAD-linked oxidoreductase family. As to quaternary structure, monomer. It depends on FAD as a cofactor.

It is found in the secreted. Its subcellular location is the extracellular space. The enzyme catalyses N(6)-dimethylallyladenine + A + H2O = 3-methyl-2-butenal + adenine + AH2. Catalyzes the oxidation of cytokinins, a family of N(6)-substituted adenine derivatives that are plant hormones, where the substituent is an isopentenyl group. The sequence is that of Cytokinin dehydrogenase 10 (CKX10) from Oryza sativa subsp. japonica (Rice).